Reading from the N-terminus, the 237-residue chain is Phosphoribosylaminoimidazole-succinocarboxamide synthase (237 aa).

The protein belongs to the SAICAR synthetase family.

It carries out the reaction 5-amino-1-(5-phospho-D-ribosyl)imidazole-4-carboxylate + L-aspartate + ATP = (2S)-2-[5-amino-1-(5-phospho-beta-D-ribosyl)imidazole-4-carboxamido]succinate + ADP + phosphate + 2 H(+). Its pathway is purine metabolism; IMP biosynthesis via de novo pathway; 5-amino-1-(5-phospho-D-ribosyl)imidazole-4-carboxamide from 5-amino-1-(5-phospho-D-ribosyl)imidazole-4-carboxylate: step 1/2. The chain is Phosphoribosylaminoimidazole-succinocarboxamide synthase from Salmonella agona (strain SL483).